The sequence spans 81 residues: Translational regulator CsrA (81 aa).

Belongs to the CsrA/RsmA family. In terms of assembly, homodimer; the beta-strands of each monomer intercalate to form a hydrophobic core, while the alpha-helices form wings that extend away from the core.

It is found in the cytoplasm. A translational regulator that binds mRNA to regulate translation initiation and/or mRNA stability. Usually binds in the 5'-UTR at or near the Shine-Dalgarno sequence preventing ribosome-binding, thus repressing translation. Its main target seems to be the major flagellin gene, while its function is anatagonized by FliW. This chain is Translational regulator CsrA, found in Halothermothrix orenii (strain H 168 / OCM 544 / DSM 9562).